The sequence spans 514 residues: 2,3-bisphosphoglycerate-independent phosphoglycerate mutase (514 aa).

The Mn(2+) site is built by aspartate 14 and serine 64. Serine 64 serves as the catalytic Phosphoserine intermediate. Substrate-binding positions include histidine 125, 155–156 (RD), arginine 187, arginine 193, 263–266 (RADR), and lysine 336. Aspartate 403, histidine 407, aspartate 444, histidine 445, and histidine 463 together coordinate Mn(2+).

The protein belongs to the BPG-independent phosphoglycerate mutase family. In terms of assembly, monomer. Requires Mn(2+) as cofactor.

The enzyme catalyses (2R)-2-phosphoglycerate = (2R)-3-phosphoglycerate. It functions in the pathway carbohydrate degradation; glycolysis; pyruvate from D-glyceraldehyde 3-phosphate: step 3/5. In terms of biological role, catalyzes the interconversion of 2-phosphoglycerate and 3-phosphoglycerate. This Salmonella paratyphi B (strain ATCC BAA-1250 / SPB7) protein is 2,3-bisphosphoglycerate-independent phosphoglycerate mutase.